Consider the following 116-residue polypeptide: MKPELLETFENQYPNRDYTIEIVNPEFTSVCPKTGLPDFGTITLQYIPNKLCVELKSLKYYYLEFRNAGIFYENVTNKILDDLVKAVKPKEMKIISEWKARGGITTTVTASYEAEK.

Residue Cys31 is the Thioimide intermediate of the active site. Asp38 (proton donor) is an active-site residue. Substrate contacts are provided by residues 53–55 and 72–73; these read VEL and YE.

This sequence belongs to the GTP cyclohydrolase I family. QueF type 1 subfamily.

Its subcellular location is the cytoplasm. It carries out the reaction 7-aminomethyl-7-carbaguanine + 2 NADP(+) = 7-cyano-7-deazaguanine + 2 NADPH + 3 H(+). Its pathway is tRNA modification; tRNA-queuosine biosynthesis. In terms of biological role, catalyzes the NADPH-dependent reduction of 7-cyano-7-deazaguanine (preQ0) to 7-aminomethyl-7-deazaguanine (preQ1). The polypeptide is NADPH-dependent 7-cyano-7-deazaguanine reductase (Chloroherpeton thalassium (strain ATCC 35110 / GB-78)).